A 109-amino-acid chain; its full sequence is Preprofallaxidin-8 (109 aa).

The signal sequence occupies residues 1 to 22 (MASLKKSLFLVLFLGLLSLSIC). A propeptide spanning residues 23-46 (EEQKRENEEDAEDENHEEESEEKR) is cleaved from the precursor. The interval 27-46 (RENEEDAEDENHEEESEEKR) is disordered. Residues 30–42 (EEDAEDENHEEES) show a composition bias toward acidic residues. Leu62 carries the leucine amide modification. Residues 66-70 (SEEKR) constitute a propeptide that is removed on maturation. Met75 is modified (methionine amide). Positions 79–83 (SEEKR) are excised as a propeptide. Methionine amide is present on Met88. 2 consecutive propeptides follow at residues 92–96 (SEEKR) and Ala108.

The protein belongs to the frog skin active peptide (FSAP) family. Brevinin subfamily. As to expression, expressed by the skin glands.

It is found in the secreted. Fallaxidin-2.1 shows no antibacterial activity against Gram-positive or Gram-negative bacteria. Does not inhibit the formation of NO by neuronal nitric oxide synthase. Has no effect on splenocyte proliferation or smooth muscle contraction. Functionally, fallaxidin-3.2 shows antibacterial activity against the Gram-positive bacteria E.faecalis (MIC=100 uM) and L.lactis (MIC=500 uM). No antibacterial activity against the Gram-positive bacteria B.cereus, L.innocua, M.luteus, S.epidermidis, S.uberis and S.aureus, or the Gram-negative bacteria E.cloacae and E.coli. The sequence is that of Preprofallaxidin-8 from Litoria fallax (Eastern dwarf tree frog).